A 341-amino-acid polypeptide reads, in one-letter code: L-threonine 3-dehydrogenase (341 aa).

C38 contacts Zn(2+). Catalysis depends on charge relay system residues T40 and H43. Residues H63, E64, C93, C96, C99, and C107 each coordinate Zn(2+). NAD(+) contacts are provided by residues I175, D195, R200, 262-264 (LGI), and 286-287 (IY).

Belongs to the zinc-containing alcohol dehydrogenase family. In terms of assembly, homotetramer. Requires Zn(2+) as cofactor.

The protein localises to the cytoplasm. It carries out the reaction L-threonine + NAD(+) = (2S)-2-amino-3-oxobutanoate + NADH + H(+). The protein operates within amino-acid degradation; L-threonine degradation via oxydo-reductase pathway; glycine from L-threonine: step 1/2. Catalyzes the NAD(+)-dependent oxidation of L-threonine to 2-amino-3-ketobutyrate. The chain is L-threonine 3-dehydrogenase from Escherichia coli O127:H6 (strain E2348/69 / EPEC).